A 315-amino-acid chain; its full sequence is Mycothiol acetyltransferase (315 aa).

N-acetyltransferase domains are found at residues 4–141 and 152–315; these read LDWR…RPLR and VVIR…GTDN. Glu-36 contributes to the 1D-myo-inositol 2-(L-cysteinylamino)-2-deoxy-alpha-D-glucopyranoside binding site. Acetyl-CoA contacts are provided by residues 80 to 82 and 88 to 93; these read LVV and RRGIGT. The 1D-myo-inositol 2-(L-cysteinylamino)-2-deoxy-alpha-D-glucopyranoside site is built by Glu-179, Lys-224, and Glu-234. Acetyl-CoA contacts are provided by residues 238–240 and 245–251; these read LGV and QRRGLGQ. Tyr-282 contacts 1D-myo-inositol 2-(L-cysteinylamino)-2-deoxy-alpha-D-glucopyranoside. 287–292 is a binding site for acetyl-CoA; that stretch reads NVAAVR.

It belongs to the acetyltransferase family. MshD subfamily. In terms of assembly, monomer.

The catalysed reaction is 1D-myo-inositol 2-(L-cysteinylamino)-2-deoxy-alpha-D-glucopyranoside + acetyl-CoA = mycothiol + CoA + H(+). Catalyzes the transfer of acetyl from acetyl-CoA to desacetylmycothiol (Cys-GlcN-Ins) to form mycothiol. This Mycobacterium bovis (strain ATCC BAA-935 / AF2122/97) protein is Mycothiol acetyltransferase.